The primary structure comprises 149 residues: Probable conjugal transfer protein TrbE part 1 (149 aa).

This sequence belongs to the TrbE/VirB4 family.

The sequence is that of Probable conjugal transfer protein TrbE part 1 (trbEA) from Sinorhizobium fredii (strain NBRC 101917 / NGR234).